Here is an 895-residue protein sequence, read N- to C-terminus: Plasma membrane ATPase 1 (895 aa).

The interval 1-53 (MSATEPTNEKVDKIVSDDEDEDIDQLVADLQSNPGAGDEEEEEENDSSFKAVP) is disordered. The Cytoplasmic portion of the chain corresponds to 1–92 (MSATEPTNEK…AEEQENLVLK (92 aa)). The segment covering 7-16 (TNEKVDKIVS) has biased composition (basic and acidic residues). Residues 37 to 46 (GDEEEEEEND) show a composition bias toward acidic residues. A helical membrane pass occupies residues 93–113 (FVMFFVGPIQFVMEAAAVLAA). The Extracellular portion of the chain corresponds to 114 to 117 (GLED). Residues 118 to 137 (WVDFGVICALLLLNAFVGFI) form a helical membrane-spanning segment. Residues 138 to 268 (QEYQAGSIVD…GTGHFTEVLN (131 aa)) are Cytoplasmic-facing. Residues 269–290 (GIGTTLLVFVIVTLLVVWVACF) traverse the membrane as a helical segment. At 291–301 (YRTVRIVPILR) the chain is on the extracellular side. A helical transmembrane segment spans residues 302-324 (YTLAITIIGVPVGLPAVVTTTMA). Residues 325-696 (VGAAYLAKKQ…IAILNRSLDI (372 aa)) lie on the Cytoplasmic side of the membrane. Asp-355 functions as the 4-aspartylphosphate intermediate in the catalytic mechanism. Positions 611 and 615 each coordinate Mg(2+). Residues 697–715 (NLIVFIAIFADVATLAIAY) traverse the membrane as a helical segment. Topologically, residues 716–731 (DNAPYDPKPVKWNLPR) are extracellular. A helical membrane pass occupies residues 732-751 (LWGMSIVLGIILAIGTWITL). Residues 752–801 (TTMLLPKGGIIQNFGGLDGILFLQISLTENWLIFVTRAQGPFWSSIPSWQ) are Cytoplasmic-facing. The helical transmembrane segment at 802–822 (LSGAVLIVDIIATCFTLFGWW) threads the bilayer. Topologically, residues 823–834 (SQNWTDIVTVVR) are extracellular. Residues 835–851 (TWIWSFGVFCVMGGAYY) form a helical membrane-spanning segment. Topologically, residues 852-895 (LMSTSEAFDNFCNGRKPQQHTDKRSLEDFLVSMQRVSTQHEKST) are cytoplasmic.

Belongs to the cation transport ATPase (P-type) (TC 3.A.3) family. Type IIIA subfamily.

The protein localises to the cell membrane. The enzyme catalyses ATP + H2O + H(+)(in) = ADP + phosphate + 2 H(+)(out). In terms of biological role, the plasma membrane ATPase of plants and fungi is a hydrogen ion pump. The proton gradient it generates drives the active transport of nutrients by H(+)-symport. The resulting external acidification and/or internal alkinization may mediate growth responses. This is Plasma membrane ATPase 1 (PMA1) from Candida albicans (Yeast).